Consider the following 320-residue polypeptide: Short-chain dehydrogenase/reductase ARMGADRAFT_1169971 (320 aa).

Residues 19–39 (KVAVVTGANSGIGLYILFHVA) traverse the membrane as a helical segment. NADP(+)-binding residues include Ile-30, Asp-78, Asn-105, and Lys-136. Asn-157 carries an N-linked (GlcNAc...) asparagine glycan. Ser-159 (proton donor) is an active-site residue. Tyr-192, Lys-196, Val-227, and Ser-229 together coordinate NADP(+). Tyr-192 acts as the Proton acceptor in catalysis. The Lowers pKa of active site Tyr role is filled by Lys-196. The chain crosses the membrane as a helical span at residues 235 to 255 (LFTSLMFGTIINWVFSLFFIS).

It belongs to the short-chain dehydrogenases/reductases (SDR) family.

Its subcellular location is the membrane. It functions in the pathway secondary metabolite biosynthesis. Short-chain dehydrogenase/reductase, part of the gene cluster that mediates the biosynthesis of melleolides, a range of antifungal and phytotoxic polyketide derivatives composed of an orsellinic acid (OA) moiety esterified to various sesquiterpene alcohols. The first step in melleolides biosynthesis is performed by the delta(6)-protoilludene synthase PRO1 which catalyzes the cyclization of farnesyl diphosphate to protoilludene. The orsellinic acid synthase armB produces OA by condensing acetyl-CoA with 3 malonyl-CoA units in a three-round chain elongation reaction folowed by a C2-C7 ring closure. ArmB further catalyzes the trans-esterification of OA to the various sesquiterpene alcohols resulting from the hydroxylation of protoilludene. The melleolides cluster also includes 5 cytochrome P450 monooxygenases, 4 NAD(+)-dependent oxidoreductases, one flavin-dependent oxidoreductase, and one O-methyltransferase. The cytochrome P450 monooxygenases may be involved in protoilludene hydroxylation to elaborate melleolides with multiple alcohol groups, such as melleolide D, which carries alcohol functionalities at C-4, C-5, C-10, and C-13. The role of the NAD(+)-dependent enzymes remains unknown. Numerous melleolides, including arnamial, show 5'-O-methylation of the aromatic moiety which may be catalyzed by the methyltransferase encoded in the cluster. The flavin-dependent oxidoreductase might represent the dehydrogenase yielding the aldehyde in position 1 of arnamial and other melleolides. Finally, several halogenase localized outside of the cluster, are able to catalyze the transfer of a single chlorine atom to the melleolide backbone, resulting in a 6'-chloromelleolide product. This is Short-chain dehydrogenase/reductase ARMGADRAFT_1169971 from Armillaria gallica (Bulbous honey fungus).